A 280-amino-acid chain; its full sequence is MRPAQPTKISLADHLAALAVEALIDEADLSPKPGLVDRRSNGAHPDMSLPLMHASALSLWPCLRQMAEAAQSFGEICQPLRASLGQLGREGEVAMLATTGGVNTHRGAIWALGLLVAVTALDPLANANTLAVRAGRLALLDDPAMVPQDSHGQQVRRRYGTGGAREQAQQGFPAVIGHGLPQLQRSRAAGASEQHARLDALLAIMAVLSDTCVLWRSGPSGLATVQQGALAVLAEGGSATLAGRRQLRELDQHLLHLNASPGGAADLLAACLFLDKAGSL.

Belongs to the CitG/MdcB family.

It catalyses the reaction 3'-dephospho-CoA + ATP = 2'-(5''-triphospho-alpha-D-ribosyl)-3'-dephospho-CoA + adenine. In terms of biological role, involved in the formation of 2-(5''-phosphoribosyl)-3'-dephosphocoenzyme-A, the prosthetic group of the acyl-carrier protein of the malonate decarboxylase. This is Probable 2-(5''-triphosphoribosyl)-3'-dephosphocoenzyme-A synthase (mdcB) from Pseudomonas putida (Arthrobacter siderocapsulatus).